The chain runs to 170 residues: ATP synthase subunit b (170 aa).

The helical transmembrane segment at 15 to 37 (LNLFETNVLNWAVVVFGLYKFLP) threads the bilayer.

This sequence belongs to the ATPase B chain family. In terms of assembly, F-type ATPases have 2 components, F(1) - the catalytic core - and F(0) - the membrane proton channel. F(1) has five subunits: alpha(3), beta(3), gamma(1), delta(1), epsilon(1). F(0) has four main subunits: a(1), b(1), b'(1) and c(10-14). The alpha and beta chains form an alternating ring which encloses part of the gamma chain. F(1) is attached to F(0) by a central stalk formed by the gamma and epsilon chains, while a peripheral stalk is formed by the delta, b and b' chains.

The protein resides in the cellular thylakoid membrane. Its function is as follows. F(1)F(0) ATP synthase produces ATP from ADP in the presence of a proton or sodium gradient. F-type ATPases consist of two structural domains, F(1) containing the extramembraneous catalytic core and F(0) containing the membrane proton channel, linked together by a central stalk and a peripheral stalk. During catalysis, ATP synthesis in the catalytic domain of F(1) is coupled via a rotary mechanism of the central stalk subunits to proton translocation. In terms of biological role, component of the F(0) channel, it forms part of the peripheral stalk, linking F(1) to F(0). The sequence is that of ATP synthase subunit b from Prochlorococcus marinus (strain MIT 9515).